Here is a 538-residue protein sequence, read N- to C-terminus: CTP synthase (538 aa).

The segment at 1–269 (MSPRKYVIVT…ARLVERRLFG (269 aa)) is amidoligase domain. Ser-15 contributes to the CTP binding site. A UTP-binding site is contributed by Ser-15. 16 to 21 (SVGKGL) serves as a coordination point for ATP. Position 56 (Tyr-56) interacts with L-glutamine. Asp-73 lines the ATP pocket. Mg(2+) contacts are provided by Asp-73 and Glu-143. CTP contacts are provided by residues 150 to 152 (DIE), 190 to 195 (KTKPVQ), and Lys-226. UTP is bound by residues 190–195 (KTKPVQ) and Lys-226. In terms of domain architecture, Glutamine amidotransferase type-1 spans 294 to 538 (KVAMVGKYTK…FVTAVARLRG (245 aa)). Gly-358 serves as a coordination point for L-glutamine. Residue Cys-385 is the Nucleophile; for glutamine hydrolysis of the active site. L-glutamine-binding positions include 386–389 (FGMQ), Glu-409, and Arg-466. Active-site residues include His-512 and Glu-514.

Belongs to the CTP synthase family. Homotetramer.

It catalyses the reaction UTP + L-glutamine + ATP + H2O = CTP + L-glutamate + ADP + phosphate + 2 H(+). The enzyme catalyses L-glutamine + H2O = L-glutamate + NH4(+). The catalysed reaction is UTP + NH4(+) + ATP = CTP + ADP + phosphate + 2 H(+). Its pathway is pyrimidine metabolism; CTP biosynthesis via de novo pathway; CTP from UDP: step 2/2. Its activity is regulated as follows. Allosterically activated by GTP, when glutamine is the substrate; GTP has no effect on the reaction when ammonia is the substrate. The allosteric effector GTP functions by stabilizing the protein conformation that binds the tetrahedral intermediate(s) formed during glutamine hydrolysis. Inhibited by the product CTP, via allosteric rather than competitive inhibition. In terms of biological role, catalyzes the ATP-dependent amination of UTP to CTP with either L-glutamine or ammonia as the source of nitrogen. Regulates intracellular CTP levels through interactions with the four ribonucleotide triphosphates. This is CTP synthase from Aeropyrum pernix (strain ATCC 700893 / DSM 11879 / JCM 9820 / NBRC 100138 / K1).